We begin with the raw amino-acid sequence, 697 residues long: Elongation factor G (697 aa).

The tr-type G domain maps to 8–283 (EHIRNIGICA…AVVDFLPSPT (276 aa)). Residues 17–24 (AHIDAGKT), 81–85 (DTPGH), and 135–138 (NKMD) contribute to the GTP site.

The protein belongs to the TRAFAC class translation factor GTPase superfamily. Classic translation factor GTPase family. EF-G/EF-2 subfamily.

It localises to the cytoplasm. Its function is as follows. Catalyzes the GTP-dependent ribosomal translocation step during translation elongation. During this step, the ribosome changes from the pre-translocational (PRE) to the post-translocational (POST) state as the newly formed A-site-bound peptidyl-tRNA and P-site-bound deacylated tRNA move to the P and E sites, respectively. Catalyzes the coordinated movement of the two tRNA molecules, the mRNA and conformational changes in the ribosome. This chain is Elongation factor G, found in Rickettsia massiliae (strain Mtu5).